Consider the following 546-residue polypeptide: uncharacterized protein (546 aa).

Transmembrane regions (helical) follow at residues 4–23 (ILLE…GYPL), 30–47 (GSSL…AMGS), 57–79 (IVYV…PAFV), 91–113 (ALII…LLGF), and 155–177 (PVVG…ISLV). 2 consecutive RCK C-terminal domains span residues 189 to 274 (GKRL…FLGE) and 275 to 359 (VSEE…FFGD). Helical transmembrane passes span 372–394 (FSLG…GGIT), 399–421 (FAGG…SMVW), 434–456 (IGLV…TTLA), 460–482 (GLAI…LWIG), 489–511 (PMSI…GYAL), and 521–543 (IGYA…ILLT).

This sequence belongs to the AAE transporter (TC 2.A.81) family.

It is found in the cell membrane. This is an uncharacterized protein from Geobacter sulfurreducens (strain ATCC 51573 / DSM 12127 / PCA).